The following is a 114-amino-acid chain: MYLRPDEVARVLEKVGFTVDVVTQKAYGYRRGENYVYVNREARMGRTALVIHPTLKERSSTLAEPASDIKTCDHYQQFPLYLAGERHEHYGIPHGFSSRVALERYLNGLFGEAS.

This is an uncharacterized protein from Escherichia coli O157:H7.